Reading from the N-terminus, the 122-residue chain is Large ribosomal subunit protein uL14 (122 aa).

The protein belongs to the universal ribosomal protein uL14 family. As to quaternary structure, part of the 50S ribosomal subunit. Forms a cluster with proteins L3 and L19. In the 70S ribosome, L14 and L19 interact and together make contacts with the 16S rRNA in bridges B5 and B8.

Functionally, binds to 23S rRNA. Forms part of two intersubunit bridges in the 70S ribosome. The protein is Large ribosomal subunit protein uL14 of Microcystis aeruginosa (strain NIES-843 / IAM M-2473).